Consider the following 230-residue polypeptide: Sodium channel modifier 1 (230 aa).

Ser-2 is subject to Phosphoserine. Residues 4–20 (KREGDDWSQLNVLKKRR) carry the Bipartite nuclear localization signal motif. The Matrin-type zinc-finger motif lies at 42–74 (FACAICPHRPVLDTLAMLTAHRAGKKHLSSLQL). A Glycyl lysine isopeptide (Lys-Gly) (interchain with G-Cter in SUMO2) cross-link involves residue Lys-67. Disordered regions lie at residues 76–106 (YGKK…EAPL), 129–186 (RRKY…SPTR), and 200–230 (GWIP…LPLD). Positions 81–102 (PGKERKQNPKHQNELRREETKA) are enriched in basic and acidic residues. Ser-144 is modified (phosphoserine). Residues 164-174 (PAAGPQAEESA) show a composition bias toward low complexity. A Phosphoserine modification is found at Ser-183. The tract at residues 188–230 (RALDHYLTLRSSGWIPDGRGRWVKDENVEFDSDEEEPPDLPLD) is required for interaction with LUC7L2. Over residues 205–214 (GRGRWVKDEN) the composition is skewed to basic and acidic residues. Acidic residues predominate over residues 215–230 (VEFDSDEEEPPDLPLD). Ser-219 is subject to Phosphoserine.

Component of the minor spliceosome, which splices U12-type introns. Within this complex, interacts with RNF113A, as well as with SF3B1/SF3b155, SF3B2/SF3b145, SF3B3/SF3b130 and CDC5L. May interact with LUC7L2 and SNRNP70.

The protein localises to the nucleus. The protein resides in the nucleoplasm. It is found in the nucleus speckle. Its function is as follows. As a component of the minor spliceosome, involved in the splicing of U12-type introns in pre-mRNAs. Plays a role in the regulation of primary cilia length and Hedgehog signaling. The polypeptide is Sodium channel modifier 1 (SCNM1) (Homo sapiens (Human)).